The sequence spans 160 residues: Small ribosomal subunit protein uS7A (160 aa).

This sequence belongs to the universal ribosomal protein uS7 family. In terms of assembly, part of the 30S ribosomal subunit. Contacts proteins S9 and S11.

In terms of biological role, one of the primary rRNA binding proteins, it binds directly to 16S rRNA where it nucleates assembly of the head domain of the 30S subunit. Is located at the subunit interface close to the decoding center, probably blocks exit of the E-site tRNA. The protein is Small ribosomal subunit protein uS7A of Aquifex aeolicus (strain VF5).